A 350-amino-acid polypeptide reads, in one-letter code: Small ribosomal subunit biogenesis GTPase RsgA (350 aa).

Over residues methionine 1 to asparagine 17 the composition is skewed to polar residues. Positions methionine 1–aspartate 33 are disordered. The 170-residue stretch at threonine 104–phenylalanine 273 folds into the CP-type G domain. GTP is bound by residues asparagine 160 to aspartate 163 and glycine 214 to serine 222. Positions 297, 302, 304, and 310 each coordinate Zn(2+).

This sequence belongs to the TRAFAC class YlqF/YawG GTPase family. RsgA subfamily. Monomer. Associates with 30S ribosomal subunit, binds 16S rRNA. Zn(2+) is required as a cofactor.

It localises to the cytoplasm. One of several proteins that assist in the late maturation steps of the functional core of the 30S ribosomal subunit. Helps release RbfA from mature subunits. May play a role in the assembly of ribosomal proteins into the subunit. Circularly permuted GTPase that catalyzes slow GTP hydrolysis, GTPase activity is stimulated by the 30S ribosomal subunit. This is Small ribosomal subunit biogenesis GTPase RsgA from Escherichia coli O6:H1 (strain CFT073 / ATCC 700928 / UPEC).